Consider the following 341-residue polypeptide: L-threonine 3-dehydrogenase (341 aa).

Cysteine 38 is a Zn(2+) binding site. Active-site charge relay system residues include threonine 40 and histidine 43. Residues histidine 63, glutamate 64, cysteine 93, cysteine 96, cysteine 99, and cysteine 107 each coordinate Zn(2+). NAD(+) is bound by residues isoleucine 175, aspartate 195, arginine 200, 262–264 (LGI), and 286–287 (IY).

This sequence belongs to the zinc-containing alcohol dehydrogenase family. As to quaternary structure, homotetramer. Zn(2+) serves as cofactor.

It is found in the cytoplasm. The catalysed reaction is L-threonine + NAD(+) = (2S)-2-amino-3-oxobutanoate + NADH + H(+). It participates in amino-acid degradation; L-threonine degradation via oxydo-reductase pathway; glycine from L-threonine: step 1/2. Functionally, catalyzes the NAD(+)-dependent oxidation of L-threonine to 2-amino-3-ketobutyrate. This Marinomonas sp. (strain MWYL1) protein is L-threonine 3-dehydrogenase.